The following is a 588-amino-acid chain: Adenine deaminase (588 aa).

Belongs to the metallo-dependent hydrolases superfamily. Adenine deaminase family. Mn(2+) is required as a cofactor.

It catalyses the reaction adenine + H2O + H(+) = hypoxanthine + NH4(+). This Desulforamulus reducens (strain ATCC BAA-1160 / DSM 100696 / MI-1) (Desulfotomaculum reducens) protein is Adenine deaminase.